Reading from the N-terminus, the 337-residue chain is Adenylosuccinate synthetase (337 aa).

Residues 12–18 and 42–44 contribute to the GTP site; these read GDEGKGK and GHT. The active-site Proton acceptor is Asp-13. Mg(2+)-binding residues include Asp-13 and Gly-42. IMP contacts are provided by residues 13–16, 40–43, Thr-124, Arg-138, Gln-176, Thr-191, and Arg-253; these read DEGK and NAGH. Catalysis depends on His-43, which acts as the Proton donor. 249 to 255 is a binding site for substrate; sequence TVTGRRR. GTP is bound by residues Arg-255, 281–283, and 321–323; these read GVD and STG.

The protein belongs to the adenylosuccinate synthetase family. In terms of assembly, homodimer. Mg(2+) serves as cofactor.

Its subcellular location is the cytoplasm. The enzyme catalyses IMP + L-aspartate + GTP = N(6)-(1,2-dicarboxyethyl)-AMP + GDP + phosphate + 2 H(+). The protein operates within purine metabolism; AMP biosynthesis via de novo pathway; AMP from IMP: step 1/2. Functionally, plays an important role in the de novo pathway of purine nucleotide biosynthesis. Catalyzes the first committed step in the biosynthesis of AMP from IMP. This Archaeoglobus fulgidus (strain ATCC 49558 / DSM 4304 / JCM 9628 / NBRC 100126 / VC-16) protein is Adenylosuccinate synthetase.